The sequence spans 185 residues: Photosystem I assembly protein Ycf4 (185 aa).

A run of 2 helical transmembrane segments spans residues 24 to 44 (YIIG…SISS) and 66 to 86 (IIMG…WYMV).

This sequence belongs to the Ycf4 family.

It is found in the cellular thylakoid membrane. Seems to be required for the assembly of the photosystem I complex. The polypeptide is Photosystem I assembly protein Ycf4 (Prochlorococcus marinus (strain MIT 9312)).